A 300-amino-acid chain; its full sequence is Type II methyltransferase M.XycI (300 aa).

A disordered region spans residues 109–129 (RGYRAPDKKNPARAMDVRPDT). The span at 112-127 (RAPDKKNPARAMDVRP) shows a compositional bias: basic and acidic residues.

Belongs to the N(4)/N(6)-methyltransferase family. N(4) subfamily.

It carries out the reaction a 2'-deoxycytidine in DNA + S-adenosyl-L-methionine = an N(4)-methyl-2'-deoxycytidine in DNA + S-adenosyl-L-homocysteine + H(+). Its function is as follows. A beta subtype methylase, recognizes the double-stranded sequence 5'-CCCGGG-3', methylates C-2 on both strands, and protects the DNA from cleavage by the XcyI endonuclease. The polypeptide is Type II methyltransferase M.XycI (xcyIM) (Xanthomonas campestris pv. cyanopsidis).